The primary structure comprises 208 residues: Protein GrpE (208 aa).

Positions 1–27 (MERMNQSRKVPIHDAAEESSAEAHETQ) are enriched in basic and acidic residues. A disordered region spans residues 1–65 (MERMNQSRKV…AEEAQEEEAA (65 aa)). Residues 45-64 (MAEEAVEQAQDAEEAQEEEA) show a composition bias toward acidic residues.

The protein belongs to the GrpE family. In terms of assembly, homodimer.

The protein localises to the cytoplasm. Participates actively in the response to hyperosmotic and heat shock by preventing the aggregation of stress-denatured proteins, in association with DnaK and GrpE. It is the nucleotide exchange factor for DnaK and may function as a thermosensor. Unfolded proteins bind initially to DnaJ; upon interaction with the DnaJ-bound protein, DnaK hydrolyzes its bound ATP, resulting in the formation of a stable complex. GrpE releases ADP from DnaK; ATP binding to DnaK triggers the release of the substrate protein, thus completing the reaction cycle. Several rounds of ATP-dependent interactions between DnaJ, DnaK and GrpE are required for fully efficient folding. The polypeptide is Protein GrpE (Desulfatibacillum aliphaticivorans).